The primary structure comprises 327 residues: rRNA 2'-O-methyltransferase fibrillarin (327 aa).

The interval 1-95 (MKPGFSPRGG…NQSGKNVMVE (95 aa)) is disordered. Residues 7 to 80 (PRGGGFGGRG…GGNRGRGGGR (74 aa)) are compositionally biased toward gly residues. 6 positions are modified to asymmetric dimethylarginine: R8, R15, R21, R24, R28, and R31. Glycyl lysine isopeptide (Lys-Gly) (interchain with G-Cter in SUMO2) cross-links involve residues K90, K108, and K115. K108 is modified (N6-acetyllysine). Phosphoserine is present on S122. N6-acetyllysine is present on K127. Phosphoserine occurs at positions 130 and 132. Glycyl lysine isopeptide (Lys-Gly) (interchain with G-Cter in SUMO2) cross-links involve residues K137, K149, and K164. S-adenosyl-L-methionine contacts are provided by residues 178-179 (TT) and 197-198 (EF). An N6-acetyllysine mark is found at K211 and K212. S-adenosyl-L-methionine is bound by residues 222 to 223 (DA) and 242 to 245 (DVAQ).

Belongs to the methyltransferase superfamily. Fibrillarin family. As to quaternary structure, component of box C/D small nucleolar ribonucleoprotein (snoRNP) particles that contain SNU13, FBL, NOP5 and NOP56, plus a guide RNA. It is associated with the U3, U8, U13, X and Y small nuclear RNAs. Component of several ribosomal and nucleolar protein complexes. Part of the small subunit (SSU) processome, composed of more than 70 proteins and the RNA chaperone small nucleolar RNA (snoRNA) U3. Interacts with PRMT5 and UTP20. Interacts with DDX5 and C1QBP. Interacts with NOL11. Interacts with PIH1D1. Interacts with RRP1B. Interacts with NOLC1. Interacts with SDE2. Interacts with NOP2 and NOP56. In terms of processing, by homology to other fibrillarins, some or all of the N-terminal domain arginines are modified to asymmetric dimethylarginine (DMA). Post-translationally, ubiquitinated. Ubiquitination leads to proteasomal degradation. Deubiquitinated by USP36. Acetylated by CREBBP/CBP, preventing methylation of 'Gln-105' of histone H2A (H2AQ104me), without affecting rRNA methylation. Deacetylation by SIRT7 restores methylation of 'Gln-105' of histone H2A (H2AQ104me).

It localises to the nucleus. The protein localises to the nucleolus. It is found in the nucleoplasm. It catalyses the reaction L-glutaminyl-[histone H2A] + S-adenosyl-L-methionine = N(5)-methyl-L-glutaminyl-[histone H2A] + S-adenosyl-L-homocysteine + H(+). The catalysed reaction is a ribonucleotide in rRNA + S-adenosyl-L-methionine = a 2'-O-methylribonucleotide in rRNA + S-adenosyl-L-homocysteine + H(+). It carries out the reaction a ribonucleotide in U6 snRNA + S-adenosyl-L-methionine = a 2'-O-methylribonucleotide in U6 snRNA + S-adenosyl-L-homocysteine + H(+). In terms of biological role, S-adenosyl-L-methionine-dependent methyltransferase that has the ability to methylate both RNAs and proteins. Involved in pre-rRNA processing by catalyzing the site-specific 2'-hydroxyl methylation of ribose moieties in pre-ribosomal RNA. Site specificity is provided by a guide RNA that base pairs with the substrate. Methylation occurs at a characteristic distance from the sequence involved in base pairing with the guide RNA. Probably catalyzes 2'-O-methylation of U6 snRNAs in box C/D RNP complexes. U6 snRNA 2'-O-methylation is required for mRNA splicing fidelity. Also acts as a protein methyltransferase by mediating methylation of 'Gln-105' of histone H2A (H2AQ104me), a modification that impairs binding of the FACT complex and is specifically present at 35S ribosomal DNA locus. Part of the small subunit (SSU) processome, first precursor of the small eukaryotic ribosomal subunit. During the assembly of the SSU processome in the nucleolus, many ribosome biogenesis factors, an RNA chaperone and ribosomal proteins associate with the nascent pre-rRNA and work in concert to generate RNA folding, modifications, rearrangements and cleavage as well as targeted degradation of pre-ribosomal RNA by the RNA exosome. The polypeptide is rRNA 2'-O-methyltransferase fibrillarin (Mus musculus (Mouse)).